The sequence spans 467 residues: ATP synthase subunit beta (467 aa).

154-161 provides a ligand contact to ATP; that stretch reads GGAGVGKT.

It belongs to the ATPase alpha/beta chains family. F-type ATPases have 2 components, CF(1) - the catalytic core - and CF(0) - the membrane proton channel. CF(1) has five subunits: alpha(3), beta(3), gamma(1), delta(1), epsilon(1). CF(0) has three main subunits: a(1), b(2) and c(9-12). The alpha and beta chains form an alternating ring which encloses part of the gamma chain. CF(1) is attached to CF(0) by a central stalk formed by the gamma and epsilon chains, while a peripheral stalk is formed by the delta and b chains.

It localises to the cell inner membrane. It catalyses the reaction ATP + H2O + 4 H(+)(in) = ADP + phosphate + 5 H(+)(out). Produces ATP from ADP in the presence of a proton gradient across the membrane. The catalytic sites are hosted primarily by the beta subunits. The polypeptide is ATP synthase subunit beta (Leptospira borgpetersenii serovar Hardjo-bovis (strain JB197)).